The sequence spans 313 residues: Porphobilinogen deaminase (313 aa).

Cys242 is subject to S-(dipyrrolylmethanemethyl)cysteine.

The protein belongs to the HMBS family. As to quaternary structure, monomer. It depends on dipyrromethane as a cofactor.

It catalyses the reaction 4 porphobilinogen + H2O = hydroxymethylbilane + 4 NH4(+). It functions in the pathway porphyrin-containing compound metabolism; protoporphyrin-IX biosynthesis; coproporphyrinogen-III from 5-aminolevulinate: step 2/4. Its function is as follows. Tetrapolymerization of the monopyrrole PBG into the hydroxymethylbilane pre-uroporphyrinogen in several discrete steps. The polypeptide is Porphobilinogen deaminase (Pseudomonas aeruginosa (strain UCBPP-PA14)).